Consider the following 277-residue polypeptide: GPALPP motifs-containing protein 1 (277 aa).

The segment at 1–240 (MARDLIGPAL…VWTDTPADRE (240 aa)) is disordered. Ala2 carries the post-translational modification N-acetylalanine. The short motif at 7–12 (GPALPP) is the GPALPP motif 1 element. Ser28 is modified (phosphoserine). Positions 32-37 (GPALPP) match the GPALPP motif 2 motif. 2 stretches are compositionally biased toward acidic residues: residues 60 to 69 (GNQESEEDDT) and 81 to 90 (DDDDDDDDEG). The GPALPP motif 3 signature appears at 93–98 (GPALPP). A Phosphoserine modification is found at Ser106. The span at 108–117 (PRPMIGPALP) shows a compositional bias: pro residues. The GPALPP motif 4 motif lies at 113–118 (GPALPP). Phosphoserine occurs at positions 138 and 143. Thr147 carries the phosphothreonine modification. 2 positions are modified to phosphoserine: Ser149 and Ser150. Residues 172-196 (EFEKRAQRMKEKLTKGDDDSSKPIT) are compositionally biased toward basic and acidic residues.

This is GPALPP motifs-containing protein 1 (GPALPP1) from Bos taurus (Bovine).